Here is a 1474-residue protein sequence, read N- to C-terminus: SH3 and multiple ankyrin repeat domains protein 2 (1474 aa).

The span at 66 to 76 shows a compositional bias: polar residues; the sequence is LSPQLLQQTPS. The interval 66-125 is disordered; sequence LSPQLLQQTPSKPDGATKSLGSYAPGPRSRSPSLNRLGGAGEDGKRPQPPHWHVGSPFTP. An SH3 domain is found at 148–207; that stretch reads VPGRLFVAIKPYQPQVDGEIPLHRGDRVKVLSIGEGGFWEGSARGHIGWFPAECVEEVQC. Gln-162 carries the phosphoserine modification. Positions 248–342 constitute a PDZ domain; that stretch reads TVVLQKKDNE…HLVLKVVTVT (95 aa). Position 373 is a phosphoserine (Ser-373). The interval 392-413 is disordered; that stretch reads RKKKDKPEEIVPASKPSRTAEN. Ser-457 is subject to Phosphoserine. Thr-486 is subject to Phosphothreonine. The tract at residues 504–534 is disordered; it reads LSMPDTSEDIPPPPQSVPPSPPPPSPTTYNC. A compositionally biased stretch (pro residues) spans 513–529; the sequence is IPPPPQSVPPSPPPPSP. Residue Ser-586 is modified to Phosphoserine. 3 disordered regions span residues 659–920, 947–995, and 1057–1153; these read TIIV…ADDK, PVAG…PAAA, and PALA…ESMD. The span at 666–678 shows a compositional bias: low complexity; the sequence is STSSSGKSSQGSS. Basic and acidic residues predominate over residues 711–722; sequence VRDREKRLEARR. Ser-724 is modified (phosphoserine). Positions 783 to 795 are enriched in gly residues; the sequence is LGGGEAGAQGEAG. Low complexity-rich tracts occupy residues 811-823 and 833-846; these read PAAA…PASP and RLLD…LALS. Composition is skewed to basic and acidic residues over residues 847–868 and 899–920; these read ARDR…KADL and RRQE…ADDK. At Thr-903 the chain carries Phosphothreonine. Positions 1075–1085 are enriched in polar residues; sequence SLNSSQPANST. Over residues 1119–1130 the composition is skewed to basic and acidic residues; sequence VDSRSSSDHHLE. The span at 1131–1151 shows a compositional bias: low complexity; that stretch reads TTSTISTVSSISTLSSEGGES. Residues 1169-1175 carry the SH3-binding motif; the sequence is PPVPPKP. Disordered regions lie at residues 1195–1216 and 1260–1401; these read EDTD…SAQA and NRGK…ISNK. Positions 1202 to 1212 are enriched in pro residues; sequence IPPPAPPPPPG. Over residues 1291-1305 the composition is skewed to low complexity; the sequence is STVSGTRSTTVTFTV. An O-linked (GlcNAc) threonine glycan is attached at Thr-1292. A compositionally biased stretch (polar residues) spans 1307 to 1317; the sequence is PGTSQPITLQS. 2 positions are modified to phosphoserine: Ser-1334 and Ser-1338. Composition is skewed to low complexity over residues 1352 to 1363 and 1385 to 1399; these read SAAAASPSPTLS and RSRS…QPIS. One can recognise an SAM domain in the interval 1411–1474; it reads WTKPDVADWL…ERALKQLLDR (64 aa).

This sequence belongs to the SHANK family. As to quaternary structure, is part of a complex with DLG4/PSD-95 and DLGAP1/GKAP. Interacts with CTTN/cortactin SH3 domain, DLGAP1/GKAP and alpha-latrotoxin receptor 1. Interacts with DNM2, DBNL, GRID2, BAIAP2, SLC9A3, PLCB3 and CFTR. Interacts with ABI1 (via SH3 domain). Interacts (via proline-rich region) with PDE4D isoform 5 (via N-terminal region). Interacts with PDE4D isoform 33, isoform 4, isoform 7, isoform 8 and isoform 9 but not isoform 32 and isoform 6. Interacts weakly with PDE4D isoform 31. Interacts with ABI1. As to expression, expressed in epithelial cells (at protein level). All isoforms except isoform 7 are expressed predominantly in brain, with highest levels in olfactory bulb, cerebral cortex, cerebellum, central gray matter and hippocampus. Moderate levels of expression are seen in the caudate putamen, thalamic nuclei and brain stem. In cerebellum primarily expressed in Purkinje cells. Isoform 7 is not expressed in brain but expressed in liver, cholangiocytes and thymus. Isoform 7 is present in pancreas, colonic mucosa and thymocytes (at protein level).

Its subcellular location is the apical cell membrane. The protein localises to the cytoplasm. It localises to the synapse. The protein resides in the postsynaptic density. It is found in the cell projection. Its subcellular location is the growth cone. The protein localises to the dendritic spine. Seems to be an adapter protein in the postsynaptic density (PSD) of excitatory synapses that interconnects receptors of the postsynaptic membrane including NMDA-type and metabotropic glutamate receptors, and the actin-based cytoskeleton. May play a role in the structural and functional organization of the dendritic spine and synaptic junction. The chain is SH3 and multiple ankyrin repeat domains protein 2 (Shank2) from Rattus norvegicus (Rat).